The chain runs to 149 residues: Large ribosomal subunit protein bL9 (149 aa).

Belongs to the bacterial ribosomal protein bL9 family.

In terms of biological role, binds to the 23S rRNA. The protein is Large ribosomal subunit protein bL9 of Ligilactobacillus salivarius (strain UCC118) (Lactobacillus salivarius).